The following is a 116-amino-acid chain: Putative pterin-4-alpha-carbinolamine dehydratase (116 aa).

This sequence belongs to the pterin-4-alpha-carbinolamine dehydratase family.

It carries out the reaction (4aS,6R)-4a-hydroxy-L-erythro-5,6,7,8-tetrahydrobiopterin = (6R)-L-erythro-6,7-dihydrobiopterin + H2O. The protein is Putative pterin-4-alpha-carbinolamine dehydratase of Microcystis aeruginosa (strain NIES-843 / IAM M-2473).